We begin with the raw amino-acid sequence, 436 residues long: KICSTOR complex protein kaptin (436 aa).

The residue at position 1 (methionine 1) is an N-acetylmethionine.

In terms of assembly, part of the KICSTOR complex composed of KPTN, ITFG2, KICS2 and SZT2. SZT2 probably serves as a link between the other three proteins in the KICSTOR complex and mediates the direct interaction with the GATOR1 complex. May associate with F-actin filaments.

It localises to the lysosome membrane. The protein resides in the cell projection. Its subcellular location is the lamellipodium. It is found in the stereocilium. In terms of biological role, as part of the KICSTOR complex functions in the amino acid-sensing branch of the TORC1 signaling pathway. Recruits, in an amino acid-independent manner, the GATOR1 complex to the lysosomal membranes and allows its interaction with GATOR2 and the RAG GTPases. Functions upstream of the RAG GTPases and is required to negatively regulate mTORC1 signaling in absence of amino acids. In absence of the KICSTOR complex mTORC1 is constitutively localized to the lysosome and activated. The KICSTOR complex is also probably involved in the regulation of mTORC1 by glucose. The polypeptide is KICSTOR complex protein kaptin (Homo sapiens (Human)).